We begin with the raw amino-acid sequence, 94 residues long: C-X-C motif chemokine 11-1 (94 aa).

Residues 1-19 (MKTVTALLLVSLAVVAIEG) form the signal peptide. Disulfide bonds link C27–C54 and C29–C71.

Belongs to the intercrine alpha (chemokine CxC) family.

The protein resides in the secreted. Ligand for cxcr3.2. Chemotactic for macrophages. The sequence is that of C-X-C motif chemokine 11-1 (cxcl11.1) from Danio rerio (Zebrafish).